Consider the following 259-residue polypeptide: Protein odd-skipped-related 1 (259 aa).

C2H2-type zinc fingers lie at residues 168 to 190, 196 to 218, and 224 to 246; these read FVCK…ERTH, YTCD…RYIH, and FKCQ…KTLH.

This sequence belongs to the Odd C2H2-type zinc-finger protein family. In terms of tissue distribution, at early gastrula stage, expressed in the involuting mesoderm and endoderm. During neurulation, expressed in the pronephric primordium, following expression of osr2. During tailbud (stage 35), expressed in the rectal diverticulum and in the kidney ducts.

It localises to the nucleus. Transcriptional repressor. Required for pronephric kidney development. This is Protein odd-skipped-related 1 from Xenopus laevis (African clawed frog).